Reading from the N-terminus, the 113-residue chain is Large ribosomal subunit protein bL17 (113 aa).

It belongs to the bacterial ribosomal protein bL17 family. As to quaternary structure, part of the 50S ribosomal subunit. Contacts protein L32.

The chain is Large ribosomal subunit protein bL17 from Clostridium beijerinckii (strain ATCC 51743 / NCIMB 8052) (Clostridium acetobutylicum).